A 280-amino-acid polypeptide reads, in one-letter code: Energy-coupling factor transporter ATP-binding protein EcfA1 (280 aa).

In terms of domain architecture, ABC transporter spans 6 to 241 (LRIENISFQY…SHMLQEIGLD (236 aa)). 40–47 (GQNGSGKS) contacts ATP.

This sequence belongs to the ABC transporter superfamily. Energy-coupling factor EcfA family. As to quaternary structure, forms a stable energy-coupling factor (ECF) transporter complex composed of 2 membrane-embedded substrate-binding proteins (S component), 2 ATP-binding proteins (A component) and 2 transmembrane proteins (T component).

The protein localises to the cell membrane. Functionally, ATP-binding (A) component of a common energy-coupling factor (ECF) ABC-transporter complex. Unlike classic ABC transporters this ECF transporter provides the energy necessary to transport a number of different substrates. The protein is Energy-coupling factor transporter ATP-binding protein EcfA1 of Bacillus cereus (strain ATCC 14579 / DSM 31 / CCUG 7414 / JCM 2152 / NBRC 15305 / NCIMB 9373 / NCTC 2599 / NRRL B-3711).